The primary structure comprises 429 residues: Adenylosuccinate synthetase (429 aa).

Residues 12–18 and 40–42 each bind GTP; these read GDEGKGK and GHT. Catalysis depends on D13, which acts as the Proton acceptor. Residues D13 and G40 each coordinate Mg(2+). IMP-binding positions include 13-16, 38-41, T128, R142, Q223, T238, and R302; these read DEGK and NAGH. H41 acts as the Proton donor in catalysis. 298 to 304 serves as a coordination point for substrate; the sequence is VNTGRPR. Residues R304, 330–332, and 412–414 each bind GTP; these read KLD and GVG.

This sequence belongs to the adenylosuccinate synthetase family. As to quaternary structure, homodimer. Requires Mg(2+) as cofactor.

The protein resides in the cytoplasm. The enzyme catalyses IMP + L-aspartate + GTP = N(6)-(1,2-dicarboxyethyl)-AMP + GDP + phosphate + 2 H(+). It functions in the pathway purine metabolism; AMP biosynthesis via de novo pathway; AMP from IMP: step 1/2. In terms of biological role, plays an important role in the de novo pathway of purine nucleotide biosynthesis. Catalyzes the first committed step in the biosynthesis of AMP from IMP. The chain is Adenylosuccinate synthetase from Arthrobacter sp. (strain FB24).